The sequence spans 2073 residues: Putative mediator of RNA polymerase II transcription subunit 26 (2073 aa).

4 disordered regions span residues 22 to 94 (IERM…QSFQ), 115 to 146 (PQLQ…TYNF), 241 to 260 (QMQQ…QQQQ), and 287 to 334 (QQHQ…QNQQ). Residues 31-41 (NQSVEMDSHTF) show a composition bias toward polar residues. Low complexity predominate over residues 42-78 (NNNNNNNNNNNINNNNNINNNNNNNNNNNNNNNSINN). Coiled coils occupy residues 166-453 (IQQQ…QQQQ) and 674-710 (LRQQ…NQTI). Composition is skewed to low complexity over residues 287 to 314 (QQHQ…QHQQ) and 322 to 334 (QQHQ…QNQQ). Disordered stretches follow at residues 796–879 (KGNN…NNDI), 908–1175 (INNN…NNNI), 1215–1260 (NTTS…TVIN), 1403–1475 (NTSS…LPPK), 1489–1539 (KLST…SLSP), 1551–1571 (AAAA…KSLS), 1587–1645 (KSQT…SKGK), 1804–1836 (INNN…TGSS), 1868–1935 (NNNN…GYNN), and 2019–2073 (FNNN…QSYS). Composition is skewed to low complexity over residues 798–870 (NNNN…NTNN) and 923–937 (SSSS…NIPN). Basic residues predominate over residues 938-947 (KPKKPVKSNS). Over residues 953 to 963 (LLEDNDSDSSD) the composition is skewed to acidic residues. Composition is skewed to low complexity over residues 964–977 (SSDS…SDSS), 1027–1038 (ASTATSTTTTTT), 1047–1065 (PTSK…TSIT), 1073–1115 (STTS…SSSS), and 1127–1156 (KKPI…STST). The segment covering 1157-1166 (LGNKNLGTPS) has biased composition (polar residues). Low complexity-rich tracts occupy residues 1215–1258 (NTTS…TTTV) and 1403–1424 (NTSS…NGNN). Positions 1425–1440 (SDKKRNRDQPITDTSK) are enriched in basic and acidic residues. 4 stretches are compositionally biased toward low complexity: residues 1444 to 1465 (SSSS…RSSS), 1490 to 1520 (LSTP…STIP), 1527 to 1539 (SSSS…SLSP), and 1551 to 1560 (AAAAKKQQTQ). Over residues 1561-1571 (ELSDSTAKSLS) the composition is skewed to polar residues. Composition is skewed to low complexity over residues 1599-1609 (SSNVSGKSDSS) and 1804-1817 (INNN…SPDE). Positions 1884–1930 (NNMGNMNNQFNNMNNNNNNNQFNNGYNNNNNNNNNNNNNNNNNNNNM) form a coiled coil.

This sequence belongs to the Mediator complex subunit 26 family. Component of the Mediator complex.

It localises to the nucleus. Component of the Mediator complex, a coactivator involved in the regulated transcription of nearly all RNA polymerase II-dependent genes. Mediator functions as a bridge to convey information from gene-specific regulatory proteins to the basal RNA polymerase II transcription machinery. Mediator is recruited to promoters by direct interactions with regulatory proteins and serves as a scaffold for the assembly of a functional preinitiation complex with RNA polymerase II and the general transcription factors. This chain is Putative mediator of RNA polymerase II transcription subunit 26 (med26), found in Dictyostelium discoideum (Social amoeba).